Reading from the N-terminus, the 551-residue chain is Protein PLASTID TRANSCRIPTIONALLY ACTIVE 12, chloroplastic (551 aa).

A chloroplast-targeting transit peptide spans 1–47; that stretch reads MASCSRTWLLPGMAPQATAQTVPRPLQSLKVFAGLPHRRRVLFSGVS. Disordered regions lie at residues 76–161 and 463–529; these read SSYF…EGES and HSYN…DQLS. Low complexity predominate over residues 109-119; that stretch reads RVRAARAPAPV. 2 stretches are compositionally biased toward acidic residues: residues 467–476 and 485–498; these read EDSDDDEEDA and SLED…DAED. Residues 505 to 516 are compositionally biased toward polar residues; that stretch reads RNWSVLKTTGQA. Basic and acidic residues predominate over residues 518–529; it reads NPKEKSKKDQLS.

As to quaternary structure, component of the plastid-encoded plastid RNA polymerase (PEP) complex.

Its subcellular location is the plastid. It localises to the chloroplast. Its function is as follows. Required for the activity of the plastid-encoded RNA polymerase (PEP) and full expression of genes transcribed by PEP. Required for the proper build-up and formation of the PEP-complex. Binds single-stranded (ss) DNA and RNA, but not double-stranded (ds) DNA. This chain is Protein PLASTID TRANSCRIPTIONALLY ACTIVE 12, chloroplastic, found in Oryza sativa subsp. japonica (Rice).